The chain runs to 704 residues: Elongation factor G 1 (704 aa).

In terms of domain architecture, tr-type G spans 8-291 (ERYRNIGISA…AVIDYLPSPA (284 aa)). GTP is bound by residues 17–24 (AHIDAGKT), 88–92 (DTPGH), and 142–145 (NKMD).

This sequence belongs to the TRAFAC class translation factor GTPase superfamily. Classic translation factor GTPase family. EF-G/EF-2 subfamily.

Its subcellular location is the cytoplasm. Functionally, catalyzes the GTP-dependent ribosomal translocation step during translation elongation. During this step, the ribosome changes from the pre-translocational (PRE) to the post-translocational (POST) state as the newly formed A-site-bound peptidyl-tRNA and P-site-bound deacylated tRNA move to the P and E sites, respectively. Catalyzes the coordinated movement of the two tRNA molecules, the mRNA and conformational changes in the ribosome. This chain is Elongation factor G 1, found in Burkholderia thailandensis (strain ATCC 700388 / DSM 13276 / CCUG 48851 / CIP 106301 / E264).